Reading from the N-terminus, the 816-residue chain is Probable disease resistance protein At4g33300 (816 aa).

The RPW8 domain occupies 1-149 (MAITDFFAGE…SLDRVIQQVG (149 aa)). Positions 95–111 (TLARKMEKLEKTISNFL) form a coiled coil. The NB-ARC domain maps to 191–443 (VKKMMFESQG…LDVLINIWIE (253 aa)). 207 to 214 (GMGGVGKT) contributes to the ATP binding site. Residues 399 to 415 (SRLLRQMEASLDNLDQT) adopt a coiled-coil conformation. LRR repeat units lie at residues 681-704 (SLSC…SKLQ), 705-727 (ALEI…ICEL), 729-751 (GLKY…IGKL), and 753-774 (KLEK…AVSL).

This sequence belongs to the disease resistance NB-LRR family.

Probable disease resistance protein. In Arabidopsis thaliana (Mouse-ear cress), this protein is Probable disease resistance protein At4g33300.